Here is a 187-residue protein sequence, read N- to C-terminus: Proline-rich protein 29 (187 aa).

Residues His133–Pro187 are disordered.

This Mus musculus (Mouse) protein is Proline-rich protein 29 (Prr29).